The following is a 547-amino-acid chain: CTP synthase (547 aa).

Positions 1-265 are amidoligase domain; it reads MARFIFITGG…DQAVLDAFQI (265 aa). S13 lines the CTP pocket. Residue S13 participates in UTP binding. Residues 14–19 and D71 contribute to the ATP site; that span reads SLGKGL. D71 and E139 together coordinate Mg(2+). CTP is bound by residues 146-148, 186-191, and K222; these read DIE and KTKPTQ. UTP is bound by residues 186–191 and K222; that span reads KTKPTQ. The 256-residue stretch at 291–546 folds into the Glutamine amidotransferase type-1 domain; sequence KIAIVGKYVQ…VRAAKESSRL (256 aa). G353 contributes to the L-glutamine binding site. The Nucleophile; for glutamine hydrolysis role is filled by C380. Residues 381 to 384, E404, and R474 each bind L-glutamine; that span reads LGMQ. Residues H519 and E521 contribute to the active site.

Belongs to the CTP synthase family. In terms of assembly, homotetramer.

It carries out the reaction UTP + L-glutamine + ATP + H2O = CTP + L-glutamate + ADP + phosphate + 2 H(+). The catalysed reaction is L-glutamine + H2O = L-glutamate + NH4(+). It catalyses the reaction UTP + NH4(+) + ATP = CTP + ADP + phosphate + 2 H(+). The protein operates within pyrimidine metabolism; CTP biosynthesis via de novo pathway; CTP from UDP: step 2/2. Allosterically activated by GTP, when glutamine is the substrate; GTP has no effect on the reaction when ammonia is the substrate. The allosteric effector GTP functions by stabilizing the protein conformation that binds the tetrahedral intermediate(s) formed during glutamine hydrolysis. Inhibited by the product CTP, via allosteric rather than competitive inhibition. Catalyzes the ATP-dependent amination of UTP to CTP with either L-glutamine or ammonia as the source of nitrogen. Regulates intracellular CTP levels through interactions with the four ribonucleotide triphosphates. The sequence is that of CTP synthase from Ruegeria pomeroyi (strain ATCC 700808 / DSM 15171 / DSS-3) (Silicibacter pomeroyi).